We begin with the raw amino-acid sequence, 362 residues long: Dual-specificity RNA methyltransferase RlmN (362 aa).

Glutamate 91 (proton acceptor) is an active-site residue. In terms of domain architecture, Radical SAM core spans 97–333 (EDDRGTLCVS…VTTRKTRGED (237 aa)). Cysteine 104 and cysteine 338 are oxidised to a cystine. [4Fe-4S] cluster is bound by residues cysteine 111, cysteine 115, and cysteine 118. S-adenosyl-L-methionine is bound by residues 164 to 165 (GE), serine 196, 218 to 220 (SLH), and asparagine 295. Cysteine 338 serves as the catalytic S-methylcysteine intermediate.

The protein belongs to the radical SAM superfamily. RlmN family. The cofactor is [4Fe-4S] cluster.

It is found in the cytoplasm. The enzyme catalyses adenosine(2503) in 23S rRNA + 2 reduced [2Fe-2S]-[ferredoxin] + 2 S-adenosyl-L-methionine = 2-methyladenosine(2503) in 23S rRNA + 5'-deoxyadenosine + L-methionine + 2 oxidized [2Fe-2S]-[ferredoxin] + S-adenosyl-L-homocysteine. It catalyses the reaction adenosine(37) in tRNA + 2 reduced [2Fe-2S]-[ferredoxin] + 2 S-adenosyl-L-methionine = 2-methyladenosine(37) in tRNA + 5'-deoxyadenosine + L-methionine + 2 oxidized [2Fe-2S]-[ferredoxin] + S-adenosyl-L-homocysteine. Functionally, specifically methylates position 2 of adenine 2503 in 23S rRNA and position 2 of adenine 37 in tRNAs. m2A2503 modification seems to play a crucial role in the proofreading step occurring at the peptidyl transferase center and thus would serve to optimize ribosomal fidelity. In Methylobacillus flagellatus (strain ATCC 51484 / DSM 6875 / VKM B-1610 / KT), this protein is Dual-specificity RNA methyltransferase RlmN.